Reading from the N-terminus, the 95-residue chain is Defensin-like protein 232 (95 aa).

Positions 1-26 are cleaved as a signal peptide; sequence MRCTTLIMVSFVVSCLLLSLVEESEA. Cystine bridges form between Cys-33–Cys-94, Cys-43–Cys-68, Cys-51–Cys-84, and Cys-66–Cys-86.

The protein belongs to the DEFL family. In terms of tissue distribution, flower buds.

It localises to the secreted. The polypeptide is Defensin-like protein 232 (SCRL23) (Arabidopsis thaliana (Mouse-ear cress)).